Here is a 155-residue protein sequence, read N- to C-terminus: Small ribosomal subunit protein uS7cz/uS7cy (155 aa).

Belongs to the universal ribosomal protein uS7 family. As to quaternary structure, part of the 30S ribosomal subunit.

Its subcellular location is the plastid. The protein localises to the chloroplast. Its function is as follows. One of the primary rRNA binding proteins, it binds directly to 16S rRNA where it nucleates assembly of the head domain of the 30S subunit. The chain is Small ribosomal subunit protein uS7cz/uS7cy (rps7-A) from Citrus sinensis (Sweet orange).